A 313-amino-acid polypeptide reads, in one-letter code: Methionyl-tRNA formyltransferase (313 aa).

109 to 112 (SLLP) contacts (6S)-5,6,7,8-tetrahydrofolate.

This sequence belongs to the Fmt family.

The enzyme catalyses L-methionyl-tRNA(fMet) + (6R)-10-formyltetrahydrofolate = N-formyl-L-methionyl-tRNA(fMet) + (6S)-5,6,7,8-tetrahydrofolate + H(+). Its function is as follows. Attaches a formyl group to the free amino group of methionyl-tRNA(fMet). The formyl group appears to play a dual role in the initiator identity of N-formylmethionyl-tRNA by promoting its recognition by IF2 and preventing the misappropriation of this tRNA by the elongation apparatus. This is Methionyl-tRNA formyltransferase from Pelotomaculum thermopropionicum (strain DSM 13744 / JCM 10971 / SI).